The sequence spans 291 residues: Protein US2 (291 aa).

Gly2 is modified (N-acetylglycine; by host). The interval 223-281 (NKPRPASSRPHPATHPTQRPCFTCMGRPEIPDEPSWQTGDDDPQNPGPPLAVGDEWPPS) is disordered.

Belongs to the herpesviridae HHV-1 US2 protein family. As to quaternary structure, interacts with host KRT18. Interacts with host MAP3K7; this interaction induces host NF-kappa-B pathway.

It localises to the virion. It is found in the host cytoplasm. Its subcellular location is the host cell surface. The protein localises to the host nucleus. Functionally, plays a role in the activation of the host NF-kappa-B pathway by interacting with and thus activating the component MAP3K7. The polypeptide is Protein US2 (Human herpesvirus 2 (strain HG52) (HHV-2)).